Consider the following 277-residue polypeptide: uncharacterized protein (277 aa).

Helical transmembrane passes span 46–66, 73–93, 143–163, 174–194, and 228–248; these read IAAI…YGGL, LFEG…ILWM, TTVI…VLIL, FFYA…GYGT, and KGLI…MEWV.

The protein belongs to the oxidase-dependent Fe transporter (OFeT) (TC 9.A.10.1) family.

Its subcellular location is the cell membrane. This is an uncharacterized protein from Archaeoglobus fulgidus (strain ATCC 49558 / DSM 4304 / JCM 9628 / NBRC 100126 / VC-16).